The primary structure comprises 100 residues: Small ribosomal subunit protein uS14c (100 aa).

The protein belongs to the universal ribosomal protein uS14 family. In terms of assembly, part of the 30S ribosomal subunit.

It localises to the plastid. The protein localises to the chloroplast. Functionally, binds 16S rRNA, required for the assembly of 30S particles. The chain is Small ribosomal subunit protein uS14c from Lobularia maritima (Sweet alyssum).